The primary structure comprises 63 residues: Keratin-associated protein 8-1 (63 aa).

A 12 X 2 AA repeats of G-[YCGS] region spans residues 12 to 54 (PGCYWGSYGYPLGYSVGCGYGSTYSPVGYGFGYGYNGCGAFGY).

It belongs to the KRTAP type 8 family. As to quaternary structure, interacts with hair keratins. As to expression, is essentially restricted to only one vertical half of the hair forming compartment and in beard hairs is absent from the central medulla.

In the hair cortex, hair keratin intermediate filaments are embedded in an interfilamentous matrix, consisting of hair keratin-associated proteins (KRTAP), which are essential for the formation of a rigid and resistant hair shaft through their extensive disulfide bond cross-linking with abundant cysteine residues of hair keratins. The matrix proteins include the high-sulfur and high-glycine-tyrosine keratins. In Homo sapiens (Human), this protein is Keratin-associated protein 8-1 (KRTAP8-1).